The following is a 195-amino-acid chain: uncharacterized protein (195 aa).

Positions 1–11 (MDYIVSPTSSE) are enriched in polar residues. A disordered region spans residues 1–118 (MDYIVSPTSS…LDTEGGFVLS (118 aa)). Acidic residues predominate over residues 35 to 46 (SPEDITDSDEQN). Positions 47 to 63 (DTTTTTSEMSSTSSVPS) are enriched in low complexity. A compositionally biased stretch (basic and acidic residues) spans 82–93 (SDSKLIFDSDNK). Over residues 94–110 (DQDDEDDEDDEELEGLD) the composition is skewed to acidic residues.

This is an uncharacterized protein from Acanthamoeba polyphaga mimivirus (APMV).